We begin with the raw amino-acid sequence, 380 residues long: MPIDPVALTADLVRCPSVTPEEGGALDLIERILSGAGFDCTRVDRNGVPNLFARWGRKGANRTFGFNGHTDVVPVGDAAAWTRDPFGGEIADGWLWGRGATDMKSGVAAFVAAAVDFVQETPPDGAVVLTITGDEEGDSTDGTVALLDWMAAEGEAMSVCLVGEPTCPERLGEMMKIGRRGSMTAFFTARGVQGHSAYPHRAKNPVAALARLIDRLSSHDLDYGTEHFDASTLAVTTFDTGNPATNVIPALCRATVNIRFNDAHSGASLTRWLEEEAARVAADTGVEIALSAKISGESFLTPPGELSELVARAVEAETGLRPEPSTSGGTSDARFVRAHCPVVEFGLVGKTMHQVDERVEVAQIEPLKAIYLRILKDYFA.

His69 lines the Zn(2+) pocket. Asp71 is an active-site residue. Asp102 provides a ligand contact to Zn(2+). The active-site Proton acceptor is Glu135. Residues Glu136, Glu164, and His353 each coordinate Zn(2+).

The protein belongs to the peptidase M20A family. DapE subfamily. Homodimer. Zn(2+) is required as a cofactor. It depends on Co(2+) as a cofactor.

The catalysed reaction is N-succinyl-(2S,6S)-2,6-diaminopimelate + H2O = (2S,6S)-2,6-diaminopimelate + succinate. The protein operates within amino-acid biosynthesis; L-lysine biosynthesis via DAP pathway; LL-2,6-diaminopimelate from (S)-tetrahydrodipicolinate (succinylase route): step 3/3. Functionally, catalyzes the hydrolysis of N-succinyl-L,L-diaminopimelic acid (SDAP), forming succinate and LL-2,6-diaminopimelate (DAP), an intermediate involved in the bacterial biosynthesis of lysine and meso-diaminopimelic acid, an essential component of bacterial cell walls. The sequence is that of Succinyl-diaminopimelate desuccinylase from Cereibacter sphaeroides (strain ATCC 17023 / DSM 158 / JCM 6121 / CCUG 31486 / LMG 2827 / NBRC 12203 / NCIMB 8253 / ATH 2.4.1.) (Rhodobacter sphaeroides).